The chain runs to 106 residues: Small ribosomal subunit protein bS20 (106 aa).

Residues methionine 1–valine 20 show a composition bias toward basic residues. Positions methionine 1–arginine 21 are disordered.

This sequence belongs to the bacterial ribosomal protein bS20 family.

In terms of biological role, binds directly to 16S ribosomal RNA. The chain is Small ribosomal subunit protein bS20 from Polaromonas naphthalenivorans (strain CJ2).